Consider the following 322-residue polypeptide: Quinolinate synthase (322 aa).

Iminosuccinate-binding residues include H37 and S54. C99 provides a ligand contact to [4Fe-4S] cluster. Iminosuccinate-binding positions include 125 to 127 (YIN) and S142. A [4Fe-4S] cluster-binding site is contributed by C185. Iminosuccinate is bound by residues 211-213 (HPE) and T228. C278 is a [4Fe-4S] cluster binding site.

The protein belongs to the quinolinate synthase family. Type 2 subfamily. It depends on [4Fe-4S] cluster as a cofactor.

The protein resides in the cytoplasm. It carries out the reaction iminosuccinate + dihydroxyacetone phosphate = quinolinate + phosphate + 2 H2O + H(+). The protein operates within cofactor biosynthesis; NAD(+) biosynthesis; quinolinate from iminoaspartate: step 1/1. Functionally, catalyzes the condensation of iminoaspartate with dihydroxyacetone phosphate to form quinolinate. The sequence is that of Quinolinate synthase from Chlorobaculum parvum (strain DSM 263 / NCIMB 8327) (Chlorobium vibrioforme subsp. thiosulfatophilum).